Reading from the N-terminus, the 180-residue chain is Adenine phosphoribosyltransferase (180 aa).

Alanine 2 carries the post-translational modification N-acetylalanine. A phosphoserine mark is found at serine 15 and serine 30. Position 60 is a phosphotyrosine (tyrosine 60). Serine 66 bears the Phosphoserine mark. The residue at position 114 (lysine 114) is an N6-acetyllysine. Phosphothreonine is present on threonine 135.

Belongs to the purine/pyrimidine phosphoribosyltransferase family. In terms of assembly, homodimer.

The protein resides in the cytoplasm. It carries out the reaction AMP + diphosphate = 5-phospho-alpha-D-ribose 1-diphosphate + adenine. The protein operates within purine metabolism; AMP biosynthesis via salvage pathway; AMP from adenine: step 1/1. In terms of biological role, catalyzes a salvage reaction resulting in the formation of AMP, that is energically less costly than de novo synthesis. This is Adenine phosphoribosyltransferase from Dipodillus campestris (North African gerbil).